Reading from the N-terminus, the 294-residue chain is Cyclin-G1 (294 aa).

This sequence belongs to the cyclin family. Cyclin G subfamily.

Its subcellular location is the nucleus. Its function is as follows. May play a role in growth regulation. Is associated with G2/M phase arrest in response to DNA damage. May be an intermediate by which p53 mediates its role as an inhibitor of cellular proliferation. This chain is Cyclin-G1 (Ccng1), found in Rattus norvegicus (Rat).